A 764-amino-acid polypeptide reads, in one-letter code: 5-methyltetrahydropteroyltriglutamate--homocysteine methyltransferase (764 aa).

5-methyltetrahydropteroyltri-L-glutamate-binding positions include 16-19 (RELK) and Lys117. L-homocysteine-binding positions include 442–444 (IGS) and Glu495. L-methionine is bound by residues 442 to 444 (IGS) and Glu495. Residues 526-527 (RC) and Trp572 contribute to the 5-methyltetrahydropteroyltri-L-glutamate site. Asp610 provides a ligand contact to L-homocysteine. Asp610 serves as a coordination point for L-methionine. Glu616 contributes to the 5-methyltetrahydropteroyltri-L-glutamate binding site. Positions 652, 654, and 676 each coordinate Zn(2+). His705 acts as the Proton donor in catalysis. Zn(2+) is bound at residue Cys737.

Belongs to the vitamin-B12 independent methionine synthase family. Zn(2+) serves as cofactor.

The enzyme catalyses 5-methyltetrahydropteroyltri-L-glutamate + L-homocysteine = tetrahydropteroyltri-L-glutamate + L-methionine. Its pathway is amino-acid biosynthesis; L-methionine biosynthesis via de novo pathway; L-methionine from L-homocysteine (MetE route): step 1/1. In terms of biological role, catalyzes the transfer of a methyl group from 5-methyltetrahydrofolate to homocysteine resulting in methionine formation. In Bordetella bronchiseptica (strain ATCC BAA-588 / NCTC 13252 / RB50) (Alcaligenes bronchisepticus), this protein is 5-methyltetrahydropteroyltriglutamate--homocysteine methyltransferase.